Consider the following 408-residue polypeptide: Multidrug resistance protein MdtG (408 aa).

The next 11 helical transmembrane spans lie at 16–36, 58–78, 92–112, 115–135, 146–166, 173–193, 224–244, 256–276, 290–310, 319–339, and 378–398; these read LIVA…VMPF, IVFS…GGLA, LGMG…QFLI, ALLG…ATQV, TLST…GLLA, PVFF…LFCI, LFVT…ILTL, VAFI…LSAP, ILIT…YVQT, FLLG…LVYN, and AVFL…WNSL.

Belongs to the major facilitator superfamily. DHA1 family. MdtG (TC 2.A.1.2.20) subfamily.

It is found in the cell inner membrane. Its function is as follows. Confers resistance to fosfomycin and deoxycholate. This is Multidrug resistance protein MdtG from Escherichia coli O127:H6 (strain E2348/69 / EPEC).